The sequence spans 74 residues: Capsid protein VP2 (74 aa).

The protein localises to the virion. Its function is as follows. This extremely basic protein may tightly bind to SSV1 DNA. Essential for virus function. This Saccharolobus solfataricus (Sulfolobus solfataricus) protein is Capsid protein VP2 (VP2).